The following is a 1319-amino-acid chain: Son of sevenless homolog 1 (1319 aa).

In terms of domain architecture, DH spans 200-390 (TYYDLVKAFM…LNVQSGMEKI (191 aa)). Residues 444–548 (FIMEGTLTRV…AALISLQYRS (105 aa)) enclose the PH domain. An N-terminal Ras-GEF domain is found at 597–741 (GIPIIKAGTV…SITKIIQRKK (145 aa)). The 240-residue stretch at 780–1019 (HPIEIARQLT…FNKSLEIEPR (240 aa)) folds into the Ras-GEF domain. A disordered region spans residues 1019-1101 (RHPKPLPRFP…ASGTSSNTDV (83 aa)). A phosphoserine mark is found at Ser1078 and Ser1082. Ser1120 and Ser1147 each carry phosphoserine; by RPS6KA3. Residues 1121–1319 (VSSISLSKGT…PPLLENAHSS (199 aa)) are disordered. Phosphoserine is present on residues Ser1164, Ser1196, and Ser1215. The span at 1194–1203 (PESPPLLPPR) shows a compositional bias: pro residues. Over residues 1238-1250 (SPSPFTPPPPQTP) the composition is skewed to pro residues. Ser1261 carries the post-translational modification Phosphoserine. Residues 1296 to 1309 (YKREHTHPSMHRDG) show a composition bias toward basic and acidic residues.

Interacts (via C-terminus) with GRB2 (via SH3 domain). Forms a complex with phosphorylated MUC1 and GRB2 (via its SH3 domains). Interacts with phosphorylated LAT2. Interacts with NCK1 and NCK2. Part of a complex consisting of ABI1, EPS8 and SOS1. Interacts (Ser-1120 and Ser-1147 phosphorylated form) with YWHAB and YWHAE. In terms of processing, phosphorylation at Ser-1120 and Ser-1147 by RPS6KA3 create YWHAB and YWHAE binding sites and which contribute to the negative regulation of EGF-induced MAPK1/3 phosphorylation. In terms of tissue distribution, expressed in most embryonic and adult tissues.

Its function is as follows. Promotes the exchange of Ras-bound GDP by GTP. Probably by promoting Ras activation, regulates phosphorylation of MAP kinase MAPK3 in response to EGF. Catalytic component of a trimeric complex that participates in transduction of signals from Ras to Rac by promoting the Rac-specific guanine nucleotide exchange factor (GEF) activity. The polypeptide is Son of sevenless homolog 1 (Sos1) (Mus musculus (Mouse)).